Reading from the N-terminus, the 394-residue chain is 8-amino-7-oxononanoate synthase (394 aa).

Residue arginine 21 coordinates substrate. 112–113 (GY) lines the pyridoxal 5'-phosphate pocket. Histidine 137 provides a ligand contact to substrate. Pyridoxal 5'-phosphate contacts are provided by serine 183, histidine 211, and threonine 239. N6-(pyridoxal phosphate)lysine is present on lysine 242. A substrate-binding site is contributed by threonine 358.

Belongs to the class-II pyridoxal-phosphate-dependent aminotransferase family. BioF subfamily. As to quaternary structure, homodimer. The cofactor is pyridoxal 5'-phosphate.

It carries out the reaction 6-carboxyhexanoyl-[ACP] + L-alanine + H(+) = (8S)-8-amino-7-oxononanoate + holo-[ACP] + CO2. It participates in cofactor biosynthesis; biotin biosynthesis. Functionally, catalyzes the decarboxylative condensation of pimeloyl-[acyl-carrier protein] and L-alanine to produce 8-amino-7-oxononanoate (AON), [acyl-carrier protein], and carbon dioxide. The chain is 8-amino-7-oxononanoate synthase from Burkholderia thailandensis (strain ATCC 700388 / DSM 13276 / CCUG 48851 / CIP 106301 / E264).